The primary structure comprises 339 residues: DNA-directed RNA polymerase subunit alpha (339 aa).

Positions Met-1–Asp-235 are alpha N-terminal domain (alpha-NTD). Positions Phe-251–Phe-339 are alpha C-terminal domain (alpha-CTD).

It belongs to the RNA polymerase alpha chain family. As to quaternary structure, homodimer. The RNAP catalytic core consists of 2 alpha, 1 beta, 1 beta' and 1 omega subunit. When a sigma factor is associated with the core the holoenzyme is formed, which can initiate transcription.

The catalysed reaction is RNA(n) + a ribonucleoside 5'-triphosphate = RNA(n+1) + diphosphate. Its function is as follows. DNA-dependent RNA polymerase catalyzes the transcription of DNA into RNA using the four ribonucleoside triphosphates as substrates. This Gluconobacter oxydans (strain 621H) (Gluconobacter suboxydans) protein is DNA-directed RNA polymerase subunit alpha.